The sequence spans 168 residues: uncharacterized protein (168 aa).

A run of 4 helical transmembrane segments spans residues methionine 1 to arginine 21, proline 41 to methionine 61, tryptophan 68 to cysteine 88, and valine 123 to phenylalanine 143.

The protein resides in the cell membrane. This is an uncharacterized protein from Bacillus subtilis (strain 168).